Consider the following 234-residue polypeptide: Small ribosomal subunit protein uS2c (234 aa).

This sequence belongs to the universal ribosomal protein uS2 family.

The protein localises to the plastid. Its subcellular location is the chloroplast. This is Small ribosomal subunit protein uS2c (rps2) from Pinus thunbergii (Japanese black pine).